An 83-amino-acid polypeptide reads, in one-letter code: Mu-theraphotoxin-Hhn2l (83 aa).

A signal peptide spans 1–21 (MKASMFLALAGLVLLFVVGYA). Residues 22–48 (SESEEKEFPIELLSKIFAVDVFKGEER) constitute a propeptide that is removed on maturation. Intrachain disulfides connect Cys-50–Cys-65, Cys-57–Cys-70, and Cys-64–Cys-77. A Leucine amide modification is found at Leu-81.

It belongs to the neurotoxin 10 (Hwtx-1) family. 15 (Hntx-3) subfamily. Monomer. As to expression, expressed by the venom gland.

The protein resides in the secreted. Its function is as follows. Lethal neurotoxin. Selectively blocks tetrodotoxin-sensitive voltage-gated sodium channels (Nav). Does not affect tetrodotoxin-resistant voltage-gated sodium channels or calcium channels. This Cyriopagopus hainanus (Chinese bird spider) protein is Mu-theraphotoxin-Hhn2l.